Here is a 257-residue protein sequence, read N- to C-terminus: Transmembrane protein 101 (257 aa).

Helical transmembrane passes span V21–E40, V52–G72, W77–G97, Y110–L130, S139–L159, L182–L202, I206–H226, and F233–L253.

It localises to the membrane. Its function is as follows. May activate NF-kappa-B signaling pathways. The chain is Transmembrane protein 101 (TMEM101) from Bos taurus (Bovine).